The following is a 225-amino-acid chain: Large ribosomal subunit protein uL1 (225 aa).

Belongs to the universal ribosomal protein uL1 family. In terms of assembly, part of the 50S ribosomal subunit.

Binds directly to 23S rRNA. The L1 stalk is quite mobile in the ribosome, and is involved in E site tRNA release. Its function is as follows. Protein L1 is also a translational repressor protein, it controls the translation of the L11 operon by binding to its mRNA. The polypeptide is Large ribosomal subunit protein uL1 (Rhodopirellula baltica (strain DSM 10527 / NCIMB 13988 / SH1)).